The chain runs to 411 residues: Putative ion-transport protein YfeO (411 aa).

11 helical membrane-spanning segments follow: residues 9–29, 54–74, 99–119, 149–169, 186–206, 223–243, 258–278, 296–316, 322–342, 343–363, and 386–406; these read MLLL…VLIA, DSPF…GLII, ALPG…SLGP, ILAS…AALI, LFAP…FFHP, IASG…AVWC, VLIL…GGPL, LGAG…VIAA, GGRI…LHAH, VEAV…VLVV, and LLCI…LLAA.

It belongs to the chloride channel (TC 2.A.49) family.

It is found in the cell membrane. The protein is Putative ion-transport protein YfeO of Salmonella agona (strain SL483).